The chain runs to 269 residues: Protein tsct-1 (269 aa).

Belongs to the TSC-22/Dip/Bun family.

The polypeptide is Protein tsct-1 (Caenorhabditis elegans).